Consider the following 254-residue polypeptide: uncharacterized protein (254 aa).

The N-terminal stretch at 1-22 (MKRLKKIVLCISFLFLTIFIGG) is a signal peptide. Residue Cys23 is the site of N-palmitoyl cysteine attachment. The S-diacylglycerol cysteine moiety is linked to residue Cys23.

This sequence belongs to the staphylococcal tandem lipoprotein family.

Its subcellular location is the cell membrane. This is an uncharacterized protein from Staphylococcus aureus (strain MSSA476).